The following is a 510-amino-acid chain: ATP synthase subunit alpha 1 (510 aa).

167–174 (GDRATGKT) is a binding site for ATP.

The protein belongs to the ATPase alpha/beta chains family. F-type ATPases have 2 components, CF(1) - the catalytic core - and CF(0) - the membrane proton channel. CF(1) has five subunits: alpha(3), beta(3), gamma(1), delta(1), epsilon(1). CF(0) has three main subunits: a(1), b(2) and c(9-12). The alpha and beta chains form an alternating ring which encloses part of the gamma chain. CF(1) is attached to CF(0) by a central stalk formed by the gamma and epsilon chains, while a peripheral stalk is formed by the delta and b chains.

It localises to the cell inner membrane. It carries out the reaction ATP + H2O + 4 H(+)(in) = ADP + phosphate + 5 H(+)(out). Functionally, produces ATP from ADP in the presence of a proton gradient across the membrane. The alpha chain is a regulatory subunit. This chain is ATP synthase subunit alpha 1, found in Paraburkholderia xenovorans (strain LB400).